Reading from the N-terminus, the 212-residue chain is MAIGLIGRKVGMTRIFTEDGVSIPVTVIEVAGNRVTQVKTLETDGYRALQVTTGTKKANRITKAEAGHFAKGGVEAGRGLWEMRLADGEGEGIEVGAELNVDIFAETVKVDVTGQSKGKGFQGGVKRWNFRTQDMTHGNSLAHRSNGSIGQNQTPGRVFKGKKMSGHMGAEQVTTQNLHVVRVDSERNLILVRGAVPGATNGDLIIKPAVKA.

At Gln153 the chain carries N5-methylglutamine.

It belongs to the universal ribosomal protein uL3 family. As to quaternary structure, part of the 50S ribosomal subunit. Forms a cluster with proteins L14 and L19. In terms of processing, methylated by PrmB.

Functionally, one of the primary rRNA binding proteins, it binds directly near the 3'-end of the 23S rRNA, where it nucleates assembly of the 50S subunit. This Shewanella denitrificans (strain OS217 / ATCC BAA-1090 / DSM 15013) protein is Large ribosomal subunit protein uL3.